Consider the following 545-residue polypeptide: ATP synthase subunit alpha (545 aa).

Residue 172–179 coordinates ATP; that stretch reads GDRKTGKT.

The protein belongs to the ATPase alpha/beta chains family. In terms of assembly, F-type ATPases have 2 components, CF(1) - the catalytic core - and CF(0) - the membrane proton channel. CF(1) has five subunits: alpha(3), beta(3), gamma(1), delta(1), epsilon(1). CF(0) has three main subunits: a(1), b(2) and c(9-12). The alpha and beta chains form an alternating ring which encloses part of the gamma chain. CF(1) is attached to CF(0) by a central stalk formed by the gamma and epsilon chains, while a peripheral stalk is formed by the delta and b chains.

The protein localises to the cell membrane. The enzyme catalyses ATP + H2O + 4 H(+)(in) = ADP + phosphate + 5 H(+)(out). In terms of biological role, produces ATP from ADP in the presence of a proton gradient across the membrane. The alpha chain is a regulatory subunit. The chain is ATP synthase subunit alpha from Nocardia farcinica (strain IFM 10152).